Reading from the N-terminus, the 606-residue chain is KH domain-containing protein At4g18375 (606 aa).

Over residues 1-10 (MVERKKRKQI) the composition is skewed to basic residues. The disordered stretch occupies residues 1 to 26 (MVERKKRKQIQRNNSESNRNQKRRIS). KH domains follow at residues 35–99 (LVVY…IGFT), 138–210 (NKEC…LFAV), 311–380 (ELVF…VEAV), 394–455 (NVKM…LIQI), and 535–599 (SSAL…ENLV).

The protein resides in the nucleus. The protein is KH domain-containing protein At4g18375 of Arabidopsis thaliana (Mouse-ear cress).